A 563-amino-acid chain; its full sequence is Probable CoA ligase CCL11 (563 aa).

ATP-binding positions include 195 to 203, 328 to 333, D426, 438 to 441, and K534; these read TSGTTSSPK, HGYGMT, and IKDR. An SBD1 region spans residues 263–328; that stretch reads DGEIIFNLIR…TESLGFVISH (66 aa). Positions 329–405 are SBD2; sequence GYGMTEMLGV…LKGSSIMLGY (77 aa).

This sequence belongs to the ATP-dependent AMP-binding enzyme family.

It localises to the cytoplasm. The protein resides in the cytosol. The chain is Probable CoA ligase CCL11 from Humulus lupulus (European hop).